Consider the following 154-residue polypeptide: Proteinase inhibitor type-2 P303.51 (154 aa).

The N-terminal stretch at 1–25 (MAVHKEVNFVAYLLIVLGLLVLVSA) is a signal peptide. 2 tandem repeats follow at residues 31-87 (AKAC…DPKK) and 88-147 (PKAC…DEPK). 8 cysteine pairs are disulfide-bonded: C34–C122, C38–C118, C46–C128, C58–C95, C61–C79, C62–C91, C68–C104, and C121–C139.

This sequence belongs to the protease inhibitor I20 (potato type II proteinase inhibitor) family.

The chain is Proteinase inhibitor type-2 P303.51 from Solanum tuberosum (Potato).